A 319-amino-acid chain; its full sequence is Coproporphyrin III ferrochelatase 2 (319 aa).

Fe-coproporphyrin III-binding positions include Tyr-13, Arg-30, Arg-46 to Tyr-47, Ser-54, and Tyr-125. Residues His-181 and Glu-262 each contribute to the Fe(2+) site.

The protein belongs to the ferrochelatase family.

Its subcellular location is the cytoplasm. It carries out the reaction Fe-coproporphyrin III + 2 H(+) = coproporphyrin III + Fe(2+). It functions in the pathway porphyrin-containing compound metabolism; protoheme biosynthesis. Functionally, involved in coproporphyrin-dependent heme b biosynthesis. Catalyzes the insertion of ferrous iron into coproporphyrin III to form Fe-coproporphyrin III. In Bacillus anthracis, this protein is Coproporphyrin III ferrochelatase 2.